A 372-amino-acid polypeptide reads, in one-letter code: MRAILALEDGSVFIGSHFGATGTEVGEACFNTSMTGYQEVLTDPSYSGQIVTMTYPLIGNYGVNPEDGESGKAQVSGFVVAELAKVHSNWRATESLGPWLEKQGVIGIEGVDTRKIAKHLRSAGAMRACLTTELTPEEAVEAARNAPSMEGCNIVDKIGSHPMTPEEVDALVTGKTLPPAEYDIVAFDFGIKYNILRQLRENGFRVTVVPAHTTAEEVLAMNPDGVFLSNGPGDPATLTDIHREVAALIGKVPMFGICLGHQIISHALGAKTFKLKFGHRGANHPVKDLKTGKISITSQNHGFAVDPDTVPDDVEITLINLNDNTVEGIAHRTLPVFSVQYHPEAAPGPRDPQYLFRDFRKMIAASKRQHAR.

The CPSase stretch occupies residues 1–179 (MRAILALEDG…ALVTGKTLPP (179 aa)). L-glutamine is bound by residues S45, G231, and G233. In terms of domain architecture, Glutamine amidotransferase type-1 spans 183 to 369 (DIVAFDFGIK…RKMIAASKRQ (187 aa)). Catalysis depends on C258, which acts as the Nucleophile. L-glutamine is bound by residues L259, Q262, N300, G302, and F303. Residues H342 and E344 contribute to the active site.

It belongs to the CarA family. Composed of two chains; the small (or glutamine) chain promotes the hydrolysis of glutamine to ammonia, which is used by the large (or ammonia) chain to synthesize carbamoyl phosphate. Tetramer of heterodimers (alpha,beta)4.

It carries out the reaction hydrogencarbonate + L-glutamine + 2 ATP + H2O = carbamoyl phosphate + L-glutamate + 2 ADP + phosphate + 2 H(+). It catalyses the reaction L-glutamine + H2O = L-glutamate + NH4(+). Its pathway is amino-acid biosynthesis; L-arginine biosynthesis; carbamoyl phosphate from bicarbonate: step 1/1. It participates in pyrimidine metabolism; UMP biosynthesis via de novo pathway; (S)-dihydroorotate from bicarbonate: step 1/3. Functionally, small subunit of the glutamine-dependent carbamoyl phosphate synthetase (CPSase). CPSase catalyzes the formation of carbamoyl phosphate from the ammonia moiety of glutamine, carbonate, and phosphate donated by ATP, constituting the first step of 2 biosynthetic pathways, one leading to arginine and/or urea and the other to pyrimidine nucleotides. The small subunit (glutamine amidotransferase) binds and cleaves glutamine to supply the large subunit with the substrate ammonia. The chain is Carbamoyl phosphate synthase small chain from Akkermansia muciniphila (strain ATCC BAA-835 / DSM 22959 / JCM 33894 / BCRC 81048 / CCUG 64013 / CIP 107961 / Muc).